Reading from the N-terminus, the 765-residue chain is 5-methyltetrahydropteroyltriglutamate--homocysteine methyltransferase (765 aa).

Residues 18–21 and Lys114 contribute to the 5-methyltetrahydropteroyltri-L-glutamate site; that span reads REWK. L-homocysteine contacts are provided by residues 437–439 and Glu490; that span reads IGS. Residues 437-439 and Glu490 contribute to the L-methionine site; that span reads IGS. Trp567 lines the 5-methyltetrahydropteroyltri-L-glutamate pocket. Residue Asp605 participates in L-homocysteine binding. Residue Asp605 participates in L-methionine binding. Glu611 contributes to the 5-methyltetrahydropteroyltri-L-glutamate binding site. Residues His647, Cys649, and Glu671 each coordinate Zn(2+). The active-site Proton donor is His700. Cys732 contributes to the Zn(2+) binding site.

It belongs to the vitamin-B12 independent methionine synthase family. Zn(2+) serves as cofactor.

The enzyme catalyses 5-methyltetrahydropteroyltri-L-glutamate + L-homocysteine = tetrahydropteroyltri-L-glutamate + L-methionine. It functions in the pathway amino-acid biosynthesis; L-methionine biosynthesis via de novo pathway; L-methionine from L-homocysteine (MetE route): step 1/1. In terms of biological role, catalyzes the transfer of a methyl group from 5-methyltetrahydrofolate to homocysteine resulting in methionine formation. The polypeptide is 5-methyltetrahydropteroyltriglutamate--homocysteine methyltransferase (Listeria innocua serovar 6a (strain ATCC BAA-680 / CLIP 11262)).